Consider the following 163-residue polypeptide: MHYTRISPALVPSLSPTAAAESSGGGTMIATVFMALLLPCVGMCIVFLIYLFLLWCSTRRRIERLRFAEPVKPVTGKGLSVLELEKIPKLTGRELAVIARSTECAVCLEDIESGQSTRLVPGCNHGFHQLCADTWLSNHTVCPVCRAELAPNLPQCNENQSPC.

Residues Ala-35–Trp-55 traverse the membrane as a helical segment. The segment at Cys-104–Arg-146 adopts an RING-type; atypical zinc-finger fold.

Belongs to the RING-type zinc finger family. ATL subfamily.

It is found in the membrane. The catalysed reaction is S-ubiquitinyl-[E2 ubiquitin-conjugating enzyme]-L-cysteine + [acceptor protein]-L-lysine = [E2 ubiquitin-conjugating enzyme]-L-cysteine + N(6)-ubiquitinyl-[acceptor protein]-L-lysine.. It functions in the pathway protein modification; protein ubiquitination. Functionally, E3 ubiquitin-protein ligase able to catalyze polyubiquitination with ubiquitin-conjugating enzyme E2 UBC8, UBC10, UBC11, UBC28 and UBC29 in vitro. The protein is E3 ubiquitin-protein ligase ATL23 (ATL23) of Arabidopsis thaliana (Mouse-ear cress).